Reading from the N-terminus, the 181-residue chain is Transcription termination/antitermination protein NusG (181 aa).

Residues 130–161 form the KOW domain; the sequence is PGELVRVSDGPFADFNGVVEEVDYEKSRLKVS.

It belongs to the NusG family. In terms of assembly, monomer. Interacts with the transcription termination factor Rho and with RNA polymerase.

Its function is as follows. Participates in transcription elongation, termination and antitermination. In the absence of Rho, increases the rate of transcription elongation by the RNA polymerase (RNAP), probably by partially suppressing pausing. In the presence of Rho, modulates most Rho-dependent termination events by interacting with the RNAP to render the complex more susceptible to the termination activity of Rho. May be required to overcome a kinetic limitation of Rho to function at certain terminators. Also involved in ribosomal RNA transcriptional antitermination. The chain is Transcription termination/antitermination protein NusG from Yersinia pestis.